Reading from the N-terminus, the 118-residue chain is V-type proton ATPase subunit F (118 aa).

It belongs to the V-ATPase F subunit family. V-ATPase is a heteromultimeric enzyme composed of a peripheral catalytic V1 complex (components A to H) attached to an integral membrane V0 proton pore complex (components: a, c, c', c'', d, e, f and VOA1).

The protein resides in the vacuole membrane. Its function is as follows. Subunit of the V1 complex of vacuolar(H+)-ATPase (V-ATPase), a multisubunit enzyme composed of a peripheral complex (V1) that hydrolyzes ATP and a membrane integral complex (V0) that translocates protons. V-ATPase is responsible for acidifying and maintaining the pH of intracellular compartments. This chain is V-type proton ATPase subunit F, found in Saccharomyces cerevisiae (strain ATCC 204508 / S288c) (Baker's yeast).